Reading from the N-terminus, the 249-residue chain is Probable transcriptional regulatory protein DICTH_1505 (249 aa).

The protein belongs to the TACO1 family.

It is found in the cytoplasm. The sequence is that of Probable transcriptional regulatory protein DICTH_1505 from Dictyoglomus thermophilum (strain ATCC 35947 / DSM 3960 / H-6-12).